An 834-amino-acid chain; its full sequence is Sodium/hydrogen exchanger 3 (834 aa).

The N-terminal stretch at 1–25 is a signal peptide; that stretch reads MWGLGARGPDRGLLLALALGGLARA. At 26–51 the chain is on the extracellular side; the sequence is GGVEVEPGGAHGESGGFQVVTFEWAH. A helical transmembrane segment spans residues 52–74; that stretch reads VQDPYVIALWILVASLAKIGFHL. Over 75–82 the chain is Cytoplasmic; sequence SHKVTSVV. Residues 83–102 traverse the membrane as a helical segment; the sequence is PESALLIVLGLVLGGIVWAA. Residues 103 to 111 lie on the Extracellular side of the membrane; the sequence is DHIASFTLT. A helical transmembrane segment spans residues 112-129; that stretch reads PTVFFFYLLPPIVLDAGY. Over 130–132 the chain is Cytoplasmic; sequence FMP. Residues 133–168 traverse the membrane as a helical segment; it reads NRLFFGNLGTILLYAVVGTVWNAATTGLSLYGVFLS. The a 1,2-diacyl-sn-glycero-3-phospho-(1D-myo-inositol) site is built by glycine 138, glycine 141, and threonine 142. Residues 169 to 181 are Extracellular-facing; sequence GLMGDLQIGLLDF. A helical membrane pass occupies residues 182 to 203; it reads LLFGSLMAAVDPVAVLAVFEEV. Over 204 to 205 the chain is Cytoplasmic; that stretch reads HV. A helical transmembrane segment spans residues 206–237; the sequence is NEVLFIIVFGESLLNDAVTVVLYNVFESFVAL. At 238-244 the chain is on the extracellular side; the sequence is GGDNVTG. A glycan (N-linked (GlcNAc...) asparagine) is linked at asparagine 241. Residues 245–279 traverse the membrane as a helical segment; it reads VDCVKGIVSFFVVSLGGTLVGVVFAFLLSLVTRFT. Residues 280–281 lie on the Cytoplasmic side of the membrane; that stretch reads KH. A helical membrane pass occupies residues 282–304; sequence VRIIEPGFVFIISYLSYLTSEML. The Extracellular portion of the chain corresponds to 305–306; sequence SL. A helical transmembrane segment spans residues 307–323; it reads SAILAITFCGICCQKYV. The Cytoplasmic segment spans residues 324 to 330; the sequence is KANISEQ. A helical membrane pass occupies residues 331–359; sequence SATTVRYTMKMLASSAETIIFMFLGISAV. The Extracellular portion of the chain corresponds to 360–367; the sequence is NPFIWTWN. Residues 368 to 389 traverse the membrane as a helical segment; it reads TAFVLLTLVFISVYRAIGVVLQ. At 390 to 402 the chain is on the cytoplasmic side; sequence TWLLNRYRMVQLE. Methionine 398 contacts a 1,2-diacyl-sn-glycero-3-phospho-(1D-myo-inositol). A helical transmembrane segment spans residues 403 to 426; the sequence is PIDQVVLSYGGLRGAVAFALVVLL. Residues 427–433 are Extracellular-facing; that stretch reads DGDKVKE. A helical transmembrane segment spans residues 434–467; it reads KNLFVSTTIIVVFFTVIFQGLTIKPLVQWLKVKR. At 468–834 the chain is on the cytoplasmic side; it reads SEHREPRLNE…PAALPESTHM (367 aa). A 1,2-diacyl-sn-glycero-3-phospho-(1D-myo-inositol)-binding residues include glutamine 497, isoleucine 498, and histidine 500. Residues serine 555 and serine 563 each carry the phosphoserine modification. Residues 575–589 form an interaction with EZR region; the sequence is RSSTVEASVSYLLRE. Residues 590–667 form an interaction with NHERF4 region; sequence NVSAVCLDMQ…RKRLESFKST (78 aa). The tract at residues 591-695 is interaction with AHCYL1; sequence VSAVCLDMQS…AQKRRNSSIP (105 aa). 2 positions are modified to phosphoserine: serine 592 and serine 607. At serine 663 the chain carries Phosphoserine; by SGK1. Residues 679 to 691 show a composition bias toward basic residues; the sequence is KLYKRERAQKRRN. Residues 679 to 728 are disordered; it reads KLYKRERAQKRRNSSIPNGKLPMESPAQNFTIKEKDLELSDTEEPPNYDE. Over residues 717 to 728 the composition is skewed to acidic residues; it reads LSDTEEPPNYDE. Serine 718, serine 810, and serine 813 each carry phosphoserine. A disordered region spans residues 814 to 834; it reads FLQADGPEERPPAALPESTHM.

It belongs to the monovalent cation:proton antiporter 1 (CPA1) transporter (TC 2.A.36) family. As to quaternary structure, homodimer. Found in the forms of complex and dynamic macromolecular complexes. Binds NHERF1 and NHERF2. Interacts with CHP1; increases SLC9A3 trafficking and activity at the plasma membrane. Interacts with CHP2 and SHANK2. Interacts with PDZK1 (via C-terminal PDZ domain). Interacts with NHERF4 and interaction decrease in response to elevated calcium ion levels. Interacts with AHCYL1; the interaction is required for SLC9A3 activity. Interacts with SNX27 (via PDZ domains); directs SLC9A3 membrane insertion from early endosomes to the plasma membrane. Interacts with EZR; interaction targets SLC9A3 to the apical membrane. Post-translationally, phosphorylated by PKA, which inhibits activity. Phosphorylation at Ser-663 by SGK1 is associated with increased abundance at the cell membrane. Phosphorylation at Ser-718 by CSNK2A1 regulates SLC9A3 activity through the formation of multiple signaling complexes.

Its subcellular location is the apical cell membrane. The protein resides in the cell membrane. The protein localises to the recycling endosome membrane. It is found in the early endosome membrane. It carries out the reaction Na(+)(in) + H(+)(out) = Na(+)(out) + H(+)(in). Its activity is regulated as follows. Seems to switch between active and inactive modes in response to various stimuli. Activated directly or indirectly by membrane phosphatidylinositol (PIs). Regulated by a variety of auxiliary proteins, which facilitate the maturation, cell surface expression and function of the transporter. Inhibited specifically by the drug tenapanor. Its function is as follows. Plasma membrane Na(+)/H(+) antiporter. Exchanges intracellular H(+) ions for extracellular Na(+) in 1:1 stoichiometry, playing a key role in salt and fluid absorption and pH homeostasis. Major apical Na(+)/H(+) exchanger in kidney and intestine playing an important role in renal and intestine Na(+) absorption and blood pressure regulation. In Homo sapiens (Human), this protein is Sodium/hydrogen exchanger 3.